We begin with the raw amino-acid sequence, 114 residues long: Aspartate 1-decarboxylase (114 aa).

Ser25 (schiff-base intermediate with substrate; via pyruvic acid) is an active-site residue. Ser25 carries the pyruvic acid (Ser) modification. Thr57 is a substrate binding site. Tyr58 serves as the catalytic Proton donor. 73–75 (GAA) provides a ligand contact to substrate.

The protein belongs to the PanD family. In terms of assembly, heterooctamer of four alpha and four beta subunits. It depends on pyruvate as a cofactor. Post-translationally, is synthesized initially as an inactive proenzyme, which is activated by self-cleavage at a specific serine bond to produce a beta-subunit with a hydroxyl group at its C-terminus and an alpha-subunit with a pyruvoyl group at its N-terminus.

It localises to the cytoplasm. The enzyme catalyses L-aspartate + H(+) = beta-alanine + CO2. It participates in cofactor biosynthesis; (R)-pantothenate biosynthesis; beta-alanine from L-aspartate: step 1/1. Functionally, catalyzes the pyruvoyl-dependent decarboxylation of aspartate to produce beta-alanine. The protein is Aspartate 1-decarboxylase of Thermotoga sp. (strain RQ2).